A 655-amino-acid polypeptide reads, in one-letter code: Mannosyl-oligosaccharide 1,2-alpha-mannosidase IA (655 aa).

Over 1-43 the chain is Cytoplasmic; that stretch reads MPVGGLLPLFSSPGGGGLGSGLGGGLGGGRKGSGPAAFRLTEK. A helical; Signal-anchor for type II membrane protein transmembrane segment spans residues 44–64; that stretch reads FVLLLVFSAFITLCFGAIFFL. The Lumenal segment spans residues 65–655; sequence PDSSKLLSGV…QKKEIDGKEK (591 aa). A disulfide bridge connects residues C478 and C510. Residue N515 is glycosylated (N-linked (GlcNAc...) asparagine). The active-site Proton donor is the E524. Residue T635 participates in Ca(2+) binding.

It belongs to the glycosyl hydrolase 47 family. Ca(2+) is required as a cofactor. Post-translationally, N-linked glycan at Asn-515 consists of Man(6)-GlcNAc(2).

Its subcellular location is the golgi apparatus membrane. The catalysed reaction is N(4)-(alpha-D-Man-(1-&gt;2)-alpha-D-Man-(1-&gt;2)-alpha-D-Man-(1-&gt;3)-[alpha-D-Man-(1-&gt;2)-alpha-D-Man-(1-&gt;3)-[alpha-D-Man-(1-&gt;2)-alpha-D-Man-(1-&gt;6)]-alpha-D-Man-(1-&gt;6)]-beta-D-Man-(1-&gt;4)-beta-D-GlcNAc-(1-&gt;4)-beta-D-GlcNAc)-L-asparaginyl-[protein] (N-glucan mannose isomer 9A1,2,3B1,2,3) + 4 H2O = N(4)-(alpha-D-Man-(1-&gt;3)-[alpha-D-Man-(1-&gt;3)-[alpha-D-Man-(1-&gt;6)]-alpha-D-Man-(1-&gt;6)]-beta-D-Man-(1-&gt;4)-beta-D-GlcNAc-(1-&gt;4)-beta-D-GlcNAc)-L-asparaginyl-[protein] (N-glucan mannose isomer 5A1,2) + 4 beta-D-mannose. It carries out the reaction N(4)-(alpha-D-Man-(1-&gt;2)-alpha-D-Man-(1-&gt;2)-alpha-D-Man-(1-&gt;3)-[alpha-D-Man-(1-&gt;3)-[alpha-D-Man-(1-&gt;2)-alpha-D-Man-(1-&gt;6)]-alpha-D-Man-(1-&gt;6)]-beta-D-Man-(1-&gt;4)-beta-D-GlcNAc-(1-&gt;4)-beta-D-GlcNAc)-L-asparaginyl-[protein] (N-glucan mannose isomer 8A1,2,3B1,3) + 3 H2O = N(4)-(alpha-D-Man-(1-&gt;3)-[alpha-D-Man-(1-&gt;3)-[alpha-D-Man-(1-&gt;6)]-alpha-D-Man-(1-&gt;6)]-beta-D-Man-(1-&gt;4)-beta-D-GlcNAc-(1-&gt;4)-beta-D-GlcNAc)-L-asparaginyl-[protein] (N-glucan mannose isomer 5A1,2) + 3 beta-D-mannose. Its pathway is protein modification; protein glycosylation. With respect to regulation, inhibited by both 1-deoxymannojirimycin and kifunensine. Involved in the maturation of Asn-linked oligosaccharides. Progressively trim alpha-1,2-linked mannose residues from Man(9)GlcNAc(2) to produce Man(5)GlcNAc(2). The polypeptide is Mannosyl-oligosaccharide 1,2-alpha-mannosidase IA (Man1a1) (Mus musculus (Mouse)).